We begin with the raw amino-acid sequence, 500 residues long: Ent-kaurene oxidase P450-4 (500 aa).

Residues 6-26 (VHWLIYVAFGAWLCSYVIHVL) form a helical membrane-spanning segment. Asparagine 240 is a glycosylation site (N-linked (GlcNAc...) asparagine). Residue cysteine 441 participates in heme binding. The N-linked (GlcNAc...) asparagine glycan is linked to asparagine 475.

This sequence belongs to the cytochrome P450 family. Heme is required as a cofactor.

It localises to the membrane. It catalyses the reaction ent-kaur-16-ene + 3 reduced [NADPH--hemoprotein reductase] + 3 O2 = ent-kaur-16-en-19-oate + 3 oxidized [NADPH--hemoprotein reductase] + 4 H2O + 4 H(+). It functions in the pathway plant hormone biosynthesis; gibberellin biosynthesis. Its function is as follows. Ent-kaurene oxidase; part of the gene cluster that mediates the biosynthesis of gibberellins (GAs), diterpenoids that may provide a selective advantage during infection of the preferred host plant, rice. Gibberellins (GAs) are diterpenoids and are synthesized via the mevalonate pathway. Biosynthesis of the major metabolite GA3 (gibberellic acid) from geranylgeranyl diphosphate (GGPP) requires 13 steps. The GGPP produced by the geranylgeranyl diphosphate synthase GGS2 is converted to ent-kaurene via ent-copalyldiphosphate in a two-step cyclization reaction performed by the bifunctional ent-copalyl diphosphate synthase/ent-kaurene synthase enzyme (CPS/KS). Ent-Kaurene is metabolized to GAs by a series of oxidation reactions catalyzed by cytochrome P450 monooxygenases. Cytochrome P450 monooxygenase P450-4 is an ent-kaurene oxidase that catalyzes the three oxidation steps between ent-kaurene and ent-kaurenoic acid. The highly multifunctional cytochrome P450 monooxygenase P450-1 then catalyzes four steps involving oxidation at two carbon atoms, in the main pathway from ent-kaurenoic acid to GA14 via GA12-aldehyde as well as producing kaurenolides and fujenoic acids as by-products. The cytochrome P450 monooxygenase P450-2 then converts GA14 to GA4 by removal of C-20. GA4 is further converted to GA7 by the GA4 desaturase DES via 1,2-desaturation before cytochrome P450 monooxygenase P450-3, a 13-hydroxylase, hydroxylates GA7 to GA3, the final product of the GA-biosynthetic pathway. This chain is Ent-kaurene oxidase P450-4, found in Gibberella fujikuroi (strain CBS 195.34 / IMI 58289 / NRRL A-6831) (Bakanae and foot rot disease fungus).